A 659-amino-acid chain; its full sequence is Protein SCARECROW 1 (659 aa).

Disordered regions lie at residues 1-33 (MGSSSLLLFPSSSSSATHSSYSPSSSSHAITSL) and 188-285 (SDPA…KQRD). Residues 190 to 228 (PAPPPPPPPSHPALLPPDATAPPPPPTSVAALPPPPPPQ) show a composition bias toward pro residues. Residues 258–271 (AAAAAAAAAAALAA) are compositionally biased toward low complexity. Residues 258-289 (AAAAAAAAAAALAAAKERKEEQRRKQRDEEGL) adopt a coiled-coil conformation. A compositionally biased stretch (basic and acidic residues) spans 272–285 (AKERKEEQRRKQRD). The 371-residue stretch at 282–652 (KQRDEEGLHL…LCLLTASAWR (371 aa)) folds into the GRAS domain. A leucine repeat I (LRI) region spans residues 289–353 (LHLLTLLLQC…VSSCLGLYAP (65 aa)). The LxCxE motif motif lies at 296 to 300 (LQCAE). Positions 372 to 437 (FQVFNGISPF…GGPPRVRLTG (66 aa)) are VHIID. Positions 403 to 407 (VHIID) match the VHIID motif. Residues 447–479 (ATGKRLSDFADTLGLPFEFCPVADKAGNLDPEK) are leucine repeat II (LRII). The segment at 488-575 (VAVHWLRHSL…QQLLSREIRN (88 aa)) is PFYRE. The interval 578-652 (AVGGPARTGD…LCLLTASAWR (75 aa)) is SAW.

Belongs to the GRAS family. In terms of assembly, interacts with SHR1, but not with SHR2.

Its subcellular location is the nucleus. Transcription factor required for quiescent center cells specification and maintenance of surrounding stem cells, and for the asymmetric cell division involved in radial pattern formation in roots. Essential for cell division but not differentiation of the ground tissue. Regulates the radial organization of the shoot axial organs. Restricts SHR movment and sequesters it into the nucleus of the endodermis. The sequence is that of Protein SCARECROW 1 (SCR1) from Oryza sativa subsp. indica (Rice).